We begin with the raw amino-acid sequence, 63 residues long: Hirudin (63 aa).

The interaction with thrombin active site stretch occupies residues 1-3 (VVY). Intrachain disulfides connect Cys-6–Cys-14, Cys-16–Cys-28, and Cys-22–Cys-39. The interval 39-63 (CVTGEGTPGPQSHNDGDFEEPEEYL) is disordered. A glycan (O-linked (GalNAc...) threonine) is linked at Thr-45. An interaction with fibrinogen-binding exosite of thrombin region spans residues 55 to 63 (DFEEPEEYL). Tyr-62 is subject to Sulfotyrosine.

Belongs to the protease inhibitor I14 (hirudin) family.

It localises to the secreted. Functionally, hirudin is a potent thrombin-specific protease inhibitor. It forms a stable non-covalent complex with alpha-thrombin, thereby abolishing its ability to cleave fibrinogen. This Poecilobdella viridis (Indian freshwater leech) protein is Hirudin.